Reading from the N-terminus, the 621-residue chain is F-box only protein 21 (621 aa).

Residues S28–F77 form the F-box domain.

Interacts with SKP1 and CUL1.

Substrate-recognition component of the SCF (SKP1-CUL1-F-box protein)-type E3 ubiquitin ligase complex. The chain is F-box only protein 21 (FBXO21) from Pongo abelii (Sumatran orangutan).